A 121-amino-acid polypeptide reads, in one-letter code: Putative iron-sulfur cluster insertion protein ErpA 1 (121 aa).

Residues Cys49, Cys113, and Cys115 each contribute to the iron-sulfur cluster site.

It belongs to the HesB/IscA family. Homodimer. Iron-sulfur cluster serves as cofactor.

Its function is as follows. Required for insertion of 4Fe-4S clusters. The protein is Putative iron-sulfur cluster insertion protein ErpA 1 of Polaromonas naphthalenivorans (strain CJ2).